A 250-amino-acid polypeptide reads, in one-letter code: 5-oxoprolinase subunit A (250 aa).

It belongs to the LamB/PxpA family. As to quaternary structure, forms a complex composed of PxpA, PxpB and PxpC.

It carries out the reaction 5-oxo-L-proline + ATP + 2 H2O = L-glutamate + ADP + phosphate + H(+). Its function is as follows. Catalyzes the cleavage of 5-oxoproline to form L-glutamate coupled to the hydrolysis of ATP to ADP and inorganic phosphate. In Streptomyces avermitilis (strain ATCC 31267 / DSM 46492 / JCM 5070 / NBRC 14893 / NCIMB 12804 / NRRL 8165 / MA-4680), this protein is 5-oxoprolinase subunit A.